The sequence spans 284 residues: Nucleotide-binding protein PputGB1_0956 (284 aa).

8–15 is an ATP binding site; sequence GRSGSGKS. 60–63 contributes to the GTP binding site; it reads DARN.

It belongs to the RapZ-like family.

Displays ATPase and GTPase activities. The polypeptide is Nucleotide-binding protein PputGB1_0956 (Pseudomonas putida (strain GB-1)).